A 956-amino-acid chain; its full sequence is Outer capsid protein VP2 (956 aa).

This sequence belongs to the orbivirus VP2 family.

Its subcellular location is the virion. Its function is as follows. The VP2 protein is one of the two proteins (with VP5) which constitute the virus particle outer capsid. It is the major target of the host immunogenic response. Responsible for viral attachment to target host cell, probably by binding to sialic acid. This attachment induces virion internalization predominantly through clathrin-dependent endocytosis. The chain is Outer capsid protein VP2 (Segment-2) from Bluetongue virus 11 (isolate USA) (BTV 11).